A 252-amino-acid polypeptide reads, in one-letter code: Phosphoribosyl-ATP pyrophosphatase (252 aa).

It belongs to the PRA-PH family.

The protein localises to the cytoplasm. It carries out the reaction 1-(5-phospho-beta-D-ribosyl)-ATP + H2O = 1-(5-phospho-beta-D-ribosyl)-5'-AMP + diphosphate + H(+). It functions in the pathway amino-acid biosynthesis; L-histidine biosynthesis; L-histidine from 5-phospho-alpha-D-ribose 1-diphosphate: step 2/9. This chain is Phosphoribosyl-ATP pyrophosphatase, found in Magnetococcus marinus (strain ATCC BAA-1437 / JCM 17883 / MC-1).